Consider the following 134-residue polypeptide: Profilin-1 (134 aa).

A disulfide bond links Cys-13 and Cys-118. The short motif at Ala-84–Thr-100 is the Involved in PIP2 interaction element. Thr-114 carries the phosphothreonine modification.

Belongs to the profilin family. As to quaternary structure, occurs in many kinds of cells as a complex with monomeric actin in a 1:1 ratio. Post-translationally, phosphorylated by MAP kinases.

It is found in the cytoplasm. It localises to the cytoskeleton. Binds to actin and affects the structure of the cytoskeleton. At high concentrations, profilin prevents the polymerization of actin, whereas it enhances it at low concentrations. By binding to PIP2, it inhibits the formation of IP3 and DG. The sequence is that of Profilin-1 (PRO1) from Olea europaea (Common olive).